A 393-amino-acid polypeptide reads, in one-letter code: Putative odorant receptor 69a, isoform A (393 aa).

Over 1 to 39 (MQLHDHMKYIDLGCKMACIPRYQWKGRPTERQFYASEQR) the chain is Cytoplasmic. A helical membrane pass occupies residues 40 to 60 (IVFLLGTICQIFQITGVLIYW). Topologically, residues 61–76 (YCNGRLATETGTFVAQ) are extracellular. Residues 77 to 97 (LSEMCSSFCLTFVGFCNVYAI) traverse the membrane as a helical segment. The Cytoplasmic portion of the chain corresponds to 98–139 (STNRNQIETLLEELHQIYPRYRKNHYRCQHYFDMAMTIMRIE). A helical membrane pass occupies residues 140-160 (FLFYMILYVYYNSAPLWVLLW). Topologically, residues 161–189 (EHLHEEYDLSFKTQTNTWFPWKVHGSALG) are extracellular. Residues 190 to 210 (FGMAVLSITVGSFVGVGFSIV) traverse the membrane as a helical segment. Over 211–269 (TQNLICLLTFQLKLHYDGISSQLVSLDCRRPGAHKELSILIAHHSRILQLGDQVNDIMN) the chain is Cytoplasmic. The chain crosses the membrane as a helical span at residues 270–290 (FVFGSSLVGATIAICMSSVSI). At 291 to 304 (MLLDLASAFKYASG) the chain is on the extracellular side. A helical transmembrane segment spans residues 305–325 (LVAFVLYNFVICYMGTEVTLA). The Cytoplasmic segment spans residues 326–365 (SGKVLPAAFYNNWYEGDLVYRRMLLILMMRATKPYMWKTY). Residues 366-386 (KLAPVSITTYMATLKFSYQMF) form a helical membrane-spanning segment. Over 387–393 (TCVRSLK) the chain is Extracellular.

It belongs to the insect chemoreceptor superfamily. Heteromeric odorant receptor channel (TC 1.A.69) family. Or49a subfamily. As to quaternary structure, interacts with Orco. Complexes exist early in the endomembrane system in olfactory sensory neurons (OSNs), coupling these complexes to the conserved ciliary trafficking pathway. In terms of tissue distribution, expressed in olfactory sensory neurons in the antenna.

It localises to the cell membrane. Functionally, odorant receptor which mediates acceptance or avoidance behavior, depending on its substrates. The odorant receptor repertoire encodes a large collection of odor stimuli that vary widely in identity, intensity, and duration. May form a complex with Orco to form odorant-sensing units, providing sensitive and prolonged odorant signaling and calcium permeability. This is Putative odorant receptor 69a, isoform A (Or69a) from Drosophila melanogaster (Fruit fly).